Consider the following 425-residue polypeptide: Serine--tRNA ligase (425 aa).

230–232 (TAE) serves as a coordination point for L-serine. 261 to 263 (RSE) contributes to the ATP binding site. E284 is a binding site for L-serine. 348–351 (EISS) provides a ligand contact to ATP. S384 contacts L-serine.

This sequence belongs to the class-II aminoacyl-tRNA synthetase family. Type-1 seryl-tRNA synthetase subfamily. Homodimer. The tRNA molecule binds across the dimer.

The protein localises to the cytoplasm. The enzyme catalyses tRNA(Ser) + L-serine + ATP = L-seryl-tRNA(Ser) + AMP + diphosphate + H(+). The catalysed reaction is tRNA(Sec) + L-serine + ATP = L-seryl-tRNA(Sec) + AMP + diphosphate + H(+). The protein operates within aminoacyl-tRNA biosynthesis; selenocysteinyl-tRNA(Sec) biosynthesis; L-seryl-tRNA(Sec) from L-serine and tRNA(Sec): step 1/1. Functionally, catalyzes the attachment of serine to tRNA(Ser). Is also able to aminoacylate tRNA(Sec) with serine, to form the misacylated tRNA L-seryl-tRNA(Sec), which will be further converted into selenocysteinyl-tRNA(Sec). This is Serine--tRNA ligase from Streptococcus pyogenes serotype M28 (strain MGAS6180).